The sequence spans 302 residues: ATP synthase mitochondrial F1 complex assembly factor 1 (302 aa).

This sequence belongs to the ATP11 family. In terms of assembly, interacts with ATP5F1B; involved in the assembly of the F1 component of the mitochondrial ATP synthase (ATPase).

It localises to the mitochondrion inner membrane. In terms of biological role, has a complex stabilizing activity in the assembly of the mitochondrial F1-F0 complex. The sequence is that of ATP synthase mitochondrial F1 complex assembly factor 1 (atpaf1) from Danio rerio (Zebrafish).